The primary structure comprises 448 residues: Tubulin alpha chain, nucleomorph (448 aa).

GTP is bound by residues Gln-11, Glu-71, Ser-140, Gly-144, Thr-145, Thr-179, Asn-206, and Asn-228. Position 71 (Glu-71) interacts with Mg(2+). The active site involves Glu-254.

This sequence belongs to the tubulin family. Dimer of alpha and beta chains. A typical microtubule is a hollow water-filled tube with an outer diameter of 25 nm and an inner diameter of 15 nM. Alpha-beta heterodimers associate head-to-tail to form protofilaments running lengthwise along the microtubule wall with the beta-tubulin subunit facing the microtubule plus end conferring a structural polarity. Microtubules usually have 13 protofilaments but different protofilament numbers can be found in some organisms and specialized cells. Mg(2+) is required as a cofactor.

It catalyses the reaction GTP + H2O = GDP + phosphate + H(+). Tubulin is the major constituent of microtubules, a cylinder consisting of laterally associated linear protofilaments composed of alpha- and beta-tubulin heterodimers. Microtubules grow by the addition of GTP-tubulin dimers to the microtubule end, where a stabilizing cap forms. Below the cap, tubulin dimers are in GDP-bound state, owing to GTPase activity of alpha-tubulin. The sequence is that of Tubulin alpha chain, nucleomorph (tubA) from Guillardia theta (Cryptophyte).